The following is a 123-amino-acid chain: Large ribosomal subunit protein bL12 (123 aa).

It belongs to the bacterial ribosomal protein bL12 family. As to quaternary structure, homodimer. Part of the ribosomal stalk of the 50S ribosomal subunit. Forms a multimeric L10(L12)X complex, where L10 forms an elongated spine to which 2 to 4 L12 dimers bind in a sequential fashion. Binds GTP-bound translation factors.

Its function is as follows. Forms part of the ribosomal stalk which helps the ribosome interact with GTP-bound translation factors. Is thus essential for accurate translation. The protein is Large ribosomal subunit protein bL12 of Geobacillus thermodenitrificans (strain NG80-2).